The sequence spans 302 residues: Probable 2-(5''-triphosphoribosyl)-3'-dephosphocoenzyme-A synthase (302 aa).

This sequence belongs to the CitG/MdcB family.

The enzyme catalyses 3'-dephospho-CoA + ATP = 2'-(5''-triphospho-alpha-D-ribosyl)-3'-dephospho-CoA + adenine. In Salmonella gallinarum (strain 287/91 / NCTC 13346), this protein is Probable 2-(5''-triphosphoribosyl)-3'-dephosphocoenzyme-A synthase.